The primary structure comprises 147 residues: Large ribosomal subunit protein uL16 (147 aa).

The protein belongs to the universal ribosomal protein uL16 family. Part of the 50S ribosomal subunit.

Functionally, binds 23S rRNA and is also seen to make contacts with the A and possibly P site tRNAs. The sequence is that of Large ribosomal subunit protein uL16 from Clostridium acetobutylicum (strain ATCC 824 / DSM 792 / JCM 1419 / IAM 19013 / LMG 5710 / NBRC 13948 / NRRL B-527 / VKM B-1787 / 2291 / W).